The primary structure comprises 293 residues: NAD kinase (293 aa).

Asp72 functions as the Proton acceptor in the catalytic mechanism. NAD(+) contacts are provided by residues Asp72–Gly73, Asn146–Asp147, Arg157, Arg174, Asp176, Thr187–Ser192, and Gln247.

The protein belongs to the NAD kinase family. A divalent metal cation is required as a cofactor.

It localises to the cytoplasm. It carries out the reaction NAD(+) + ATP = ADP + NADP(+) + H(+). Involved in the regulation of the intracellular balance of NAD and NADP, and is a key enzyme in the biosynthesis of NADP. Catalyzes specifically the phosphorylation on 2'-hydroxyl of the adenosine moiety of NAD to yield NADP. The sequence is that of NAD kinase from Chromohalobacter salexigens (strain ATCC BAA-138 / DSM 3043 / CIP 106854 / NCIMB 13768 / 1H11).